The sequence spans 470 residues: MAMATATPAAQNEQQEKGGLEYVYLSGLGNSLSSEAVAGTLPRGQNSPLVCPLGLYAEQLSGTPFTAPRARNLRTWLYRIKPSVTHEPFHPRRPAHPRLIGDFDRTTTDTVATPTQLRWRPADVPPHHPPLDFIDGLYTVCGAGSSFLRHGYAIHMYAANKSMDGCAFCNADGDFLIVPQQGKLLITTECGKLLVPPGEIVVIPQGFRFAVDLPDGPSRGYVSEIFGTHFQLPDLGPIGANGLASARDFLSPTAWFEQVHRPGYTIVQKYGGELFTATQDFSPFNVVAWHGNYVPYKYDLSKFCPFNTVLFDHADPSVNTVLTAPTDKPGVALLDFVIFPPRWLVAENTFRPPYYHRNCMSEFMGLIYGIYEAKADGFLPGGASLHSCMTPHGPDTKTYEATISRPDANEPSRLSGTLAFMFESALIPRVCQWALDSPSRDLDYYQCWIGLKSHFSHDNGGATSEEPCRK.

H356, E362, and H392 together coordinate Fe cation.

It belongs to the homogentisate dioxygenase family. Requires Fe cation as cofactor.

The catalysed reaction is homogentisate + O2 = 4-maleylacetoacetate + H(+). Its pathway is amino-acid degradation; L-phenylalanine degradation; acetoacetate and fumarate from L-phenylalanine: step 4/6. This is Homogentisate 1,2-dioxygenase (HGO) from Oryza sativa subsp. japonica (Rice).